The sequence spans 144 residues: Small ribosomal subunit protein uS12 (144 aa).

A 3-methylthioaspartic acid modification is found at Asp-103. Residues 121-144 are disordered; sequence VANRKQGRSKYGTKKASAVPAKKK.

The protein belongs to the universal ribosomal protein uS12 family. In terms of assembly, part of the 30S ribosomal subunit. Contacts proteins S8 and S17. May interact with IF1 in the 30S initiation complex.

Functionally, with S4 and S5 plays an important role in translational accuracy. Its function is as follows. Interacts with and stabilizes bases of the 16S rRNA that are involved in tRNA selection in the A site and with the mRNA backbone. Located at the interface of the 30S and 50S subunits, it traverses the body of the 30S subunit contacting proteins on the other side and probably holding the rRNA structure together. The combined cluster of proteins S8, S12 and S17 appears to hold together the shoulder and platform of the 30S subunit. In Roseiflexus castenholzii (strain DSM 13941 / HLO8), this protein is Small ribosomal subunit protein uS12.